Here is a 34-residue protein sequence, read N- to C-terminus: MAQPTASAQKLVRPIRAVCRILQIPESDPSNLRP.

May function as an inhibitory translational control element that can negatively regulate protein translation of HR gene. The protein is Protein HRURF of Homo sapiens (Human).